The primary structure comprises 572 residues: Na(+)/citrate cotransporter (572 aa).

A run of 8 helical transmembrane segments spans residues 13–33 (SFAILLFTPILMLPLVILIPD), 53–73 (VIPVAVTSLLPVLLFPLLKVL), 80–100 (IQYMKDTNMLFLGSLIVAVAV), 124–144 (LMLGFMFVTAFLSMWISNTAA), 218–238 (SASIGGTATLTGTGPNVVLLG), 255–275 (SWFGFAFPNMVMMLVLAWLWL), 315–335 (SLSYPECNVLFCFTLLVILWF), and 357–377 (HITDATVAIFVAILLFIIPSQ). Asparagine 382 carries an N-linked (GlcNAc...) asparagine glycan. Helical transmembrane passes span 410-430 (VPWDIVLLLGGGFAMAKGCET), 443-463 (PLRLVKPAVITLILSCLVAMT), 491-511 (PLYVMIPCTMSASLAFMLPVA), and 532-552 (TGLIMNFVGILSVFLSVNTWG). Residue asparagine 566 is glycosylated (N-linked (GlcNAc...) asparagine).

This sequence belongs to the SLC13A/DASS transporter (TC 2.A.47) family. NADC subfamily. Homodimer.

Its subcellular location is the cell membrane. It carries out the reaction citrate(out) + 4 Na(+)(out) = citrate(in) + 4 Na(+)(in). Inhibited by Li(+). Functionally, high-affinity sodium/citrate cotransporter that mediates citrate entry into cells, which is a critical participant of biochemical pathways. May function in various metabolic processes in which citrate has a critical role such as energy production (Krebs cycle), fatty acid synthesis, cholesterol synthesis, glycolysis, and gluconeogenesis. Transports citrate into the cell in a Na(+)-dependent manner, recognizing the trivalent form of citrate (physiological pH) rather than the divalent form. Can recognizes succinate as a substrate, but its affinity for succinate is several fold lower than for citrate. The stoichiometry is probably 4 Na(+) for each carboxylate, irrespective of whether the translocated substrate is divalent or trivalent, rendering the process electrogenic. Involved in the regulation of citrate levels in the brain. The polypeptide is Na(+)/citrate cotransporter (Slc13a5) (Mus musculus (Mouse)).